The following is a 332-amino-acid chain: MATEIFYDADADLGIIQGRKVAVIGYGSQGHAHALSLRDSGADVRIGLPEGSKSRAKAEEEGLRVLTPAEASAEADLIMILAPDTKQRQIYADDIAPNLKSGDALFFGHGFNIRYGLIKPPSDVDVAMVAPKGPGHLVRRQFVDGKGVPCLIAVEQDASGNAQALALSYAAGIGGARAGVIKTTFTEETETDLFGEQAVLCGGASALVQTGFEVLVEAGYQPEIAYFEVLHELKLIVDLMWEGGIAGQRYSISDTAEYGDLTRGPRVIDAHVKESMRKILAEVQDGTFAKEWVAEDEAGRPNFNKLQDQGNAHQIEEVGKKLRSLMSWTQRP.

Residues 3–183 enclose the KARI N-terminal Rossmann domain; the sequence is TEIFYDADAD…GGARAGVIKT (181 aa). NADP(+) is bound by residues 26–29, Ser52, Ser54, and 84–87; these read YGSQ and DTKQ. His109 is an active-site residue. Gly135 contributes to the NADP(+) binding site. The KARI C-terminal knotted domain maps to 184 to 329; sequence TFTEETETDL…KKLRSLMSWT (146 aa). Residues Asp192, Glu196, Glu228, and Glu232 each contribute to the Mg(2+) site. Residue Ser253 coordinates substrate.

This sequence belongs to the ketol-acid reductoisomerase family. It depends on Mg(2+) as a cofactor.

The catalysed reaction is (2R)-2,3-dihydroxy-3-methylbutanoate + NADP(+) = (2S)-2-acetolactate + NADPH + H(+). It catalyses the reaction (2R,3R)-2,3-dihydroxy-3-methylpentanoate + NADP(+) = (S)-2-ethyl-2-hydroxy-3-oxobutanoate + NADPH + H(+). The protein operates within amino-acid biosynthesis; L-isoleucine biosynthesis; L-isoleucine from 2-oxobutanoate: step 2/4. It participates in amino-acid biosynthesis; L-valine biosynthesis; L-valine from pyruvate: step 2/4. Its function is as follows. Involved in the biosynthesis of branched-chain amino acids (BCAA). Catalyzes an alkyl-migration followed by a ketol-acid reduction of (S)-2-acetolactate (S2AL) to yield (R)-2,3-dihydroxy-isovalerate. In the isomerase reaction, S2AL is rearranged via a Mg-dependent methyl migration to produce 3-hydroxy-3-methyl-2-ketobutyrate (HMKB). In the reductase reaction, this 2-ketoacid undergoes a metal-dependent reduction by NADPH to yield (R)-2,3-dihydroxy-isovalerate. This Saccharopolyspora erythraea (strain ATCC 11635 / DSM 40517 / JCM 4748 / NBRC 13426 / NCIMB 8594 / NRRL 2338) protein is Ketol-acid reductoisomerase (NADP(+)).